A 658-amino-acid chain; its full sequence is Structure-specific endonuclease subunit SLX4 (658 aa).

Disordered stretches follow at residues 17–37, 74–123, and 327–383; these read VDSD…IPGD, GATE…KSIT, and QPGV…QVLQ. Composition is skewed to low complexity over residues 75–90 and 99–108; these read ATES…PPAK and KAAGRTSTGT. Polar residues predominate over residues 365 to 374; the sequence is FPKSPTSTPE.

It belongs to the SLX4 family. In terms of assembly, forms a heterodimer with SLX1. Post-translationally, phosphorylated in response to DNA damage.

It is found in the nucleus. Its function is as follows. Regulatory subunit of the SLX1-SLX4 structure-specific endonuclease that resolves DNA secondary structures generated during DNA repair and recombination. Has endonuclease activity towards branched DNA substrates, introducing single-strand cuts in duplex DNA close to junctions with ss-DNA. The sequence is that of Structure-specific endonuclease subunit SLX4 from Lachancea thermotolerans (strain ATCC 56472 / CBS 6340 / NRRL Y-8284) (Yeast).